Reading from the N-terminus, the 178-residue chain is Probable coatomer subunit zeta-B (178 aa).

Belongs to the adaptor complexes small subunit family. As to quaternary structure, oligomeric complex that consists of at least the alpha, beta, beta', gamma, delta, epsilon and zeta subunits.

The protein localises to the cytoplasm. Its subcellular location is the golgi apparatus membrane. It is found in the cytoplasmic vesicle. The protein resides in the COPI-coated vesicle membrane. In terms of biological role, the coatomer is a cytosolic protein complex that binds to dilysine motifs and reversibly associates with Golgi non-clathrin-coated vesicles, which further mediate biosynthetic protein transport from the ER, via the Golgi up to the trans Golgi network. Coatomer complex is required for budding from Golgi membranes, and is essential for the retrograde Golgi-to-ER transport of dilysine-tagged proteins. The zeta subunit may be involved in regulating the coat assembly and, hence, the rate of biosynthetic protein transport due to its association-dissociation properties with the coatomer complex. This chain is Probable coatomer subunit zeta-B (copZb), found in Dictyostelium discoideum (Social amoeba).